The chain runs to 202 residues: Protein EMBRYO DEFECTIVE 514 (202 aa).

2 disordered regions span residues 1–69 and 168–202; these read MAEE…PVKL and MKTPGANGNGHGGGRGGGGGRRGGRGGGRGGRFRR. A2 carries the N-acetylalanine modification. Basic and acidic residues-rich tracts occupy residues 33–42 and 51–65; these read ETGDEKRERE and GESKKQKVGEEEKSG. Over residues 174–202 the composition is skewed to gly residues; that stretch reads NGNGHGGGRGGGGGRRGGRGGGRGGRFRR.

Expressed in leaves, flowers and embryos at globular stage.

Its subcellular location is the nucleus. In terms of biological role, may play a role in ribosome biogenesis and in determining the rate of cell division. Involved in a process essential for nuclear and nucleolar functions. The sequence is that of Protein EMBRYO DEFECTIVE 514 from Arabidopsis thaliana (Mouse-ear cress).